The following is a 214-amino-acid chain: Ribonuclease HII (214 aa).

The RNase H type-2 domain occupies glutamate 26–arginine 214. A divalent metal cation contacts are provided by aspartate 32, glutamate 33, and aspartate 124.

Belongs to the RNase HII family. The cofactor is Mn(2+). Mg(2+) is required as a cofactor.

Its subcellular location is the cytoplasm. It catalyses the reaction Endonucleolytic cleavage to 5'-phosphomonoester.. Endonuclease that specifically degrades the RNA of RNA-DNA hybrids. The polypeptide is Ribonuclease HII (Burkholderia orbicola (strain MC0-3)).